Here is a 158-residue protein sequence, read N- to C-terminus: Transcriptional repressor NrdR (158 aa).

The segment at M1–E20 is disordered. The segment at C3–C34 is a zinc-finger region. The ATP-cone domain occupies L49 to D139.

The protein belongs to the NrdR family. Zn(2+) serves as cofactor.

In terms of biological role, negatively regulates transcription of bacterial ribonucleotide reductase nrd genes and operons by binding to NrdR-boxes. In Afipia carboxidovorans (strain ATCC 49405 / DSM 1227 / KCTC 32145 / OM5) (Oligotropha carboxidovorans), this protein is Transcriptional repressor NrdR.